A 234-amino-acid polypeptide reads, in one-letter code: AA9 family lytic polysaccharide monooxygenase D (234 aa).

Residues 1–18 (MRIEKLLNAALLAGAVSA) form the signal peptide. H19 and H95 together coordinate Cu(2+). An intrachain disulfide couples C57 to C182. O2-binding residues include H168 and Q177. Y179 lines the Cu(2+) pocket.

It belongs to the polysaccharide monooxygenase AA9 family. Requires Cu(2+) as cofactor.

The protein localises to the secreted. It carries out the reaction [(1-&gt;4)-beta-D-glucosyl]n+m + reduced acceptor + O2 = 4-dehydro-beta-D-glucosyl-[(1-&gt;4)-beta-D-glucosyl]n-1 + [(1-&gt;4)-beta-D-glucosyl]m + acceptor + H2O.. Lytic polysaccharide monooxygenase (LPMO) that depolymerizes crystalline and amorphous polysaccharides via the oxidation of scissile alpha- or beta-(1-4)-glycosidic bonds, yielding C1 or C4 oxidation products. Catalysis by LPMOs requires the reduction of the active-site copper from Cu(II) to Cu(I) by a reducing agent and H(2)O(2) or O(2) as a cosubstrate. The polypeptide is AA9 family lytic polysaccharide monooxygenase D (Malbranchea cinnamomea (Thermophilic fungus)).